Reading from the N-terminus, the 1360-residue chain is Zinc finger protein GLI1 (1360 aa).

Residues 198–245 are disordered; the sequence is DTIGSKRLEDGSEGDISSPASVGTQDPLLGLLDGRDDLEKDDGKHEPE. Residues 230-245 are compositionally biased toward basic and acidic residues; it reads DGRDDLEKDDGKHEPE. The segment at 250-275 adopts a C2H2-type 1 zinc-finger fold; sequence TNCHWESCTKEFDTQEHLVHHINNEH. Positions 298–306 are interaction with DNA; the sequence is KAQYMLVVH. C2H2-type zinc fingers lie at residues 316–340, 346–371, and 377–402; these read HKCTFEGCNKAYSRLENLKTHLRSH, YVCEHEGCNKAFSNASDRAKHQNRTH, and YVCKIPGCTKRYTDPSSLRKHVKTVH. 2 interaction with DNA regions span residues 360-365 and 390-396; these read ASDRAK and DPSSLRK. 4 disordered regions span residues 390–434, 457–500, 718–740, and 1120–1213; these read DPSS…NVKG, ITLK…SFED, IIHPAQAPGAGIRRASDPARTGG, and YMNY…IQPQ. A compositionally biased stretch (low complexity) spans 461–473; sequence SQPSPGGQSSCSS. Residues 474-496 show a composition bias toward polar residues; the sequence is ERSPLGSTNNNDSGVEMNANTGG. Residues 1134–1143 are compositionally biased toward low complexity; that stretch reads SPSSQDSQSS. The span at 1173–1190 shows a compositional bias: polar residues; sequence RQHSVSSQSTYMGSPNQL.

The protein belongs to the GLI C2H2-type zinc-finger protein family.

It localises to the cytoplasm. The protein localises to the nucleus. In terms of biological role, acts as a transcriptional activator. Binds to the DNA consensus sequence 5'-GACCACCCA-3'. May regulate the transcription of specific genes during normal development. Mediates SHH signaling. Plays a role in cell proliferation and differentiation via its role in SHH signaling. The sequence is that of Zinc finger protein GLI1 (gli1) from Xenopus laevis (African clawed frog).